Reading from the N-terminus, the 918-residue chain is Leucine--tRNA ligase (918 aa).

Residues Pro40–His51 carry the 'HIGH' region motif. The 'KMSKS' region signature appears at Lys692–Ser696. Residue Lys695 participates in ATP binding.

This sequence belongs to the class-I aminoacyl-tRNA synthetase family.

The protein localises to the cytoplasm. The enzyme catalyses tRNA(Leu) + L-leucine + ATP = L-leucyl-tRNA(Leu) + AMP + diphosphate. This Azobacteroides pseudotrichonymphae genomovar. CFP2 protein is Leucine--tRNA ligase.